Reading from the N-terminus, the 325-residue chain is Tetraacyldisaccharide 4'-kinase (325 aa).

55 to 62 (TAGGNGKT) lines the ATP pocket.

The protein belongs to the LpxK family.

It catalyses the reaction a lipid A disaccharide + ATP = a lipid IVA + ADP + H(+). It functions in the pathway glycolipid biosynthesis; lipid IV(A) biosynthesis; lipid IV(A) from (3R)-3-hydroxytetradecanoyl-[acyl-carrier-protein] and UDP-N-acetyl-alpha-D-glucosamine: step 6/6. In terms of biological role, transfers the gamma-phosphate of ATP to the 4'-position of a tetraacyldisaccharide 1-phosphate intermediate (termed DS-1-P) to form tetraacyldisaccharide 1,4'-bis-phosphate (lipid IVA). In Salmonella dublin (strain CT_02021853), this protein is Tetraacyldisaccharide 4'-kinase.